Here is a 471-residue protein sequence, read N- to C-terminus: V-type ATP synthase beta chain (471 aa).

This sequence belongs to the ATPase alpha/beta chains family.

Produces ATP from ADP in the presence of a proton gradient across the membrane. The V-type beta chain is a regulatory subunit. The polypeptide is V-type ATP synthase beta chain (Streptococcus pyogenes serotype M12 (strain MGAS2096)).